Here is a 316-residue protein sequence, read N- to C-terminus: Probable cell division protein WhiA (316 aa).

A DNA-binding region (H-T-H motif) is located at residues 275–309 (TLKELGEMVASGKISKSGINHRLRKLDEIAEQLRT).

This sequence belongs to the WhiA family.

Functionally, involved in cell division and chromosome segregation. The protein is Probable cell division protein WhiA of Bacillus velezensis (strain DSM 23117 / BGSC 10A6 / LMG 26770 / FZB42) (Bacillus amyloliquefaciens subsp. plantarum).